A 132-amino-acid chain; its full sequence is Putative holo-[acyl-carrier-protein] synthase (132 aa).

Residues Asp6 and Glu67 each coordinate Mg(2+).

It belongs to the P-Pant transferase superfamily. AcpS family.

It catalyses the reaction apo-[ACP] + CoA = holo-[ACP] + adenosine 3',5'-bisphosphate + H(+). Transfers the 4'-phosphopantetheine moiety from coenzyme A to a Ser of acyl-carrier-protein. This is Putative holo-[acyl-carrier-protein] synthase (new8) from Schizosaccharomyces pombe (strain 972 / ATCC 24843) (Fission yeast).